Reading from the N-terminus, the 246-residue chain is Small ribosomal subunit protein uS3A (246 aa).

In terms of domain architecture, KH type-2 spans 21 to 92 (LNEFLTRELA…SVELYAEKVA (72 aa)). A disordered region spans residues 215 to 246 (DEIVPTTPISEQKAAKPDQPQPPAMPQPVATA).

Belongs to the universal ribosomal protein uS3 family.

The protein localises to the cytoplasm. It localises to the nucleus. It is found in the nucleolus. Its subcellular location is the mitochondrion inner membrane. The protein resides in the cytoskeleton. The protein localises to the spindle. It catalyses the reaction 2'-deoxyribonucleotide-(2'-deoxyribose 5'-phosphate)-2'-deoxyribonucleotide-DNA = a 3'-end 2'-deoxyribonucleotide-(2,3-dehydro-2,3-deoxyribose 5'-phosphate)-DNA + a 5'-end 5'-phospho-2'-deoxyribonucleoside-DNA + H(+). In terms of biological role, component of the small ribosomal subunit. The ribosome is a large ribonucleoprotein complex responsible for the synthesis of proteins in the cell. Has endonuclease activity and plays a role in repair of damaged DNA. Also involved in other processes including regulation of transcription, translation of its cognate mRNA, spindle formation and chromosome movement during mitosis, and apoptosis. The sequence is that of Small ribosomal subunit protein uS3A (rps3-a) from Xenopus laevis (African clawed frog).